Reading from the N-terminus, the 781-residue chain is Catenin beta-1 (781 aa).

At Ala2 the chain carries N-acetylalanine. The interval 2–23 (ATQADLMELDMAMEPDRKAAVS) is interaction with VCL. Ser23 bears the Phosphoserine; by GSK3-beta; alternate mark. Residue Ser23 is glycosylated (O-linked (GlcNAc) serine; alternate). The residue at position 29 (Ser29) is a Phosphoserine; by GSK3-beta. Residues Ser33 and Ser37 each carry the phosphoserine; by GSK3-beta and HIPK2 modification. Positions 34–57 (GIHSGATTTAPSLSGKGNPEEEDV) are disordered. Residue Thr41 is modified to Phosphothreonine; by GSK3-beta. Position 45 is a phosphoserine (Ser45). Lys49 carries the N6-acetyllysine modification. Tyr64 carries the post-translational modification Phosphotyrosine; by PTK6. A Phosphotyrosine; by FYN and PTK6 modification is found at Tyr142. ARM repeat units lie at residues 151 to 191 (RAIP…IMRS), 193 to 234 (QMVS…IFKS), 235 to 276 (GGIP…VRLA), 277 to 318 (GGLQ…ILAS), 319 to 360 (GGPQ…IVEA), 361 to 389 (GGMQ…RNLS), 400 to 441 (GLLG…VCQV), 442 to 484 (GGIE…AQNA), 489 to 530 (YGLP…LREQ), 531 to 571 (GAIP…EIVE), 594 to 636 (NTIP…AEGA), and 637 to 666 (TAPL…SEDK). Residues 156–178 (LTKLLNDEDQVVVNKAAVMVHQL) are interaction with BCL9. Residue Ser191 is modified to Phosphoserine; by CDK5. A Phosphoserine; by CDK5 modification is found at Ser246. Residue Tyr331 is modified to Phosphotyrosine; by PTK6. Tyr333 carries the post-translational modification Phosphotyrosine; by SRC and PTK6. A Phosphoserine modification is found at Ser552. Thr556 bears the (Microbial infection) Phosphothreonine mark. The residue at position 556 (Thr556) is a Phosphothreonine. Cys619 is subject to S-nitrosocysteine. Ser675 carries the post-translational modification Phosphoserine. The tract at residues 705-781 (EPLGYRQDDP…NQLAWFDTDL (77 aa)) is disordered. The span at 734–745 (MMEHEMGGHHPG) shows a compositional bias: basic and acidic residues. The interaction with SCRIB stretch occupies residues 772–781 (NQLAWFDTDL).

It belongs to the beta-catenin family. Two separate complex-associated pools are found in the cytoplasm. The majority is present as component of an E-cadherin:catenin adhesion complex composed of at least E-cadherin/CDH1 and beta-catenin/CTNNB1, and possibly alpha-catenin/CTNNA1; the complex is located to adherens junctions. The stable association of CTNNA1 is controversial as CTNNA1 was shown not to bind to F-actin when assembled in the complex. Alternatively, the CTNNA1-containing complex may be linked to F-actin by other proteins such as LIMA1. Another cytoplasmic pool is part of a large complex containing AXIN1, AXIN2, APC, CSNK1A1 and GSK3B that promotes phosphorylation on N-terminal Ser and Thr residues and ubiquitination of CTNNB1 via BTRC and its subsequent degradation by the proteasome. Wnt-dependent activation of DVL antagonizes the action of GSK3B. When GSK3B activity is inhibited the complex dissociates, CTNNB1 is dephosphorylated and is no longer targeted for destruction. The stabilized protein translocates to the nucleus, where it binds TCF/LEF-1 family members, BCL9, BCL9L and possibly also RUVBL1 and CHD8. Binds CTNNBIP and EP300. CTNNB1 forms a ternary complex with LEF1 and EP300 that is disrupted by CTNNBIP1 binding. Interacts with TAX1BP3 (via the PDZ domain); this interaction inhibits the transcriptional activity of CTNNB1. Interacts with AJAP1, BAIAP1, CARM1, CTNNA3, CXADR and PCDH11Y. Binds NHERF1. Interacts with GLIS2 and MUC1. Interacts with SLC30A9. Interacts with XIRP1. Interacts directly with AXIN1; the interaction is regulated by CDK2 phosphorylation of AXIN1. Interacts with SCRIB. Interacts with RAPGEF2. Interacts with PTPRU (via the cytoplasmic juxtamembrane domain). Interacts with EMD. Interacts with TNIK and TCF7L2. Interacts with SESTD1 and TRPC4. Interacts with CAV1. Interacts with TRPV4. The TRPV4 and CTNNB1 complex can interact with CDH1. Interacts with VCL. Interacts with PTPRJ. Interacts with PKT7 and CDK2. Interacts with FAT1 (via the cytoplasmic domain). Interacts with NANOS1 and NDRG2. Interacts with isoform 1 of NEK2. Interacts with both isoform 1 and isoform 2 of CDK5. Interacts with PTK6. Interacts with SOX7; this interaction may lead to proteasomal degradation of active CTNNB1 and thus inhibition of Wnt/beta-catenin-stimulated transcription. Identified in a complex with HINT1 and MITF. Interacts with FHIT. The CTNNB1 and TCF7L2/TCF4 complex interacts with PML (isoform PML-4). Interacts with FERMT2. Identified in a complex with TCF7L2/TCF4 and FERMT2. Interacts with RORA. May interact with P-cadherin/CDH3. Interacts with RNF220. Interacts with CTNND2. Interacts (via the C-terminal region) with CBY1. The complex composed, at least, of APC, CTNNB1 and GSK3B interacts with JPT1; the interaction requires the inactive form of GSK3B (phosphorylated at 'Ser-9'). Interacts with DLG5. Interacts with FAM53B; promoting translocation to the nucleus. Interacts with TMEM170B. Interacts with AHI1. Interacts with GID8. Component of an cadherin:catenin adhesion complex composed of at least of CDH26, beta-catenin/CTNNB1, alpha-catenin/CTNNA1 and p120 catenin/CTNND1. Forms a complex comprising APPL1, RUVBL2, APPL2, HDAC1 and HDAC2. Interacts with IRF2BPL; mediates the ubiquitination and degradation of CTNNB1. Interacts with AMFR. Interacts with LMBR1L. Interacts with SOX30; prevents interaction of CTNNB1 with TCF7L2/TCF4 and leads to inhibition of Wnt signaling. Interacts with SOX9; inhibiting CTNNB1 activity by competing with the binding sites of TCF/LEF within CTNNB1, thereby inhibiting the Wnt signaling. Interacts with SPN/CD43 cytoplasmic tail. Interacts (when phosphorylated at Tyr-333) with isoform M2 of PKM (PKM2); promoting transcription activation. Interacts with PKP2 (via HEAD domain). Interacts with CDH1. Interacts (when unphosphorylated) with FLYWCH1, perhaps preventing interaction of CTNNB1 with TCF4, and thereby regulating transcription activation; phosphorylation of CTNNB1 may inhibit the interaction. Interacts (via the central armadillo domains) with probable transcriptional regulator ADNP (via N-terminal region); interaction is direct and stabilizes CTNNB1 by modulating its phosphorylation by glycogen synthase kinase-3 beta GSK3B. Interacts with NR5A2. Interacts with DSG2; the interaction promotes localization of CTNNB1 at cell junctions thus reducing its nuclear localization and subsequent transcription of CTNNB1/TCF-target genes. As to quaternary structure, (Microbial infection) Interacts with herpes virus 8 protein vPK; this interaction inhibits the Wnt signaling pathway. In terms of processing, phosphorylation at Ser-552 by AMPK promotes stabilization of the protein, enhancing TCF/LEF-mediated transcription. Phosphorylation by GSK3B requires prior phosphorylation of Ser-45 by another kinase. Phosphorylation proceeds then from Thr-41 to Ser-37 and Ser-33. Phosphorylated by NEK2. EGF stimulates tyrosine phosphorylation. Phosphorylated on Ser-33 and Ser-37 by HIPK2 and GSK3B, this phosphorylation triggers proteasomal degradation. Phosphorylation on Ser-191 and Ser-246 by CDK5. Phosphorylation by CDK2 regulates insulin internalization. Phosphorylation by PTK6 at Tyr-64, Tyr-142, Tyr-331 and/or Tyr-333 with the predominant site at Tyr-64 is not essential for inhibition of transcriptional activity. Phosphorylation by SRC at Tyr-333 promotes interaction with isoform M2 of PKM (PKM2); promoting transcription activation. Post-translationally, ubiquitinated by the SCF(BTRC) E3 ligase complex when phosphorylated by GSK3B, leading to its degradation. Ubiquitinated by a E3 ubiquitin ligase complex containing UBE2D1, SIAH1, CACYBP/SIP, SKP1, APC and TBL1X, leading to its subsequent proteasomal degradation. Ubiquitinated and degraded following interaction with SOX9. Ubiquitinated via 'Lys-11'- and 'Lys-29'-linked ubiquitin chains by UBR5, leading to its stabilization. S-nitrosylation at Cys-619 within adherens junctions promotes VEGF-induced, NO-dependent endothelial cell permeability by disrupting interaction with E-cadherin, thus mediating disassembly adherens junctions. In terms of processing, O-glycosylation at Ser-23 decreases nuclear localization and transcriptional activity, and increases localization to the plasma membrane and interaction with E-cadherin CDH1. Post-translationally, deacetylated at Lys-49 by SIRT1. Phosphorylated at Thr-556 by herpes virus 1/HHV-1 leading to CTNNB1 inhibition. As to expression, expressed in several hair follicle cell types: basal and peripheral matrix cells, and cells of the outer and inner root sheaths. Expressed in colon. Present in cortical neurons (at protein level). Expressed in breast cancer tissues (at protein level).

It is found in the cytoplasm. It localises to the nucleus. The protein resides in the cytoskeleton. The protein localises to the cell junction. Its subcellular location is the adherens junction. It is found in the cell membrane. It localises to the microtubule organizing center. The protein resides in the centrosome. The protein localises to the spindle pole. Its subcellular location is the synapse. It is found in the cilium basal body. Key downstream component of the canonical Wnt signaling pathway. In the absence of Wnt, forms a complex with AXIN1, AXIN2, APC, CSNK1A1 and GSK3B that promotes phosphorylation on N-terminal Ser and Thr residues and ubiquitination of CTNNB1 via BTRC and its subsequent degradation by the proteasome. In the presence of Wnt ligand, CTNNB1 is not ubiquitinated and accumulates in the nucleus, where it acts as a coactivator for transcription factors of the TCF/LEF family, leading to activate Wnt responsive genes. Also acts as a coactivator for other transcription factors, such as NR5A2. Promotes epithelial to mesenchymal transition/mesenchymal to epithelial transition (EMT/MET) via driving transcription of CTNNB1/TCF-target genes. Involved in the regulation of cell adhesion, as component of an E-cadherin:catenin adhesion complex. Acts as a negative regulator of centrosome cohesion. Involved in the CDK2/PTPN6/CTNNB1/CEACAM1 pathway of insulin internalization. Blocks anoikis of malignant kidney and intestinal epithelial cells and promotes their anchorage-independent growth by down-regulating DAPK2. Disrupts PML function and PML-NB formation by inhibiting RANBP2-mediated sumoylation of PML. Promotes neurogenesis by maintaining sympathetic neuroblasts within the cell cycle. Involved in chondrocyte differentiation via interaction with SOX9: SOX9-binding competes with the binding sites of TCF/LEF within CTNNB1, thereby inhibiting the Wnt signaling. Acts as a positive regulator of odontoblast differentiation during mesenchymal tooth germ formation, via promoting the transcription of differentiation factors such as LEF1, BMP2 and BMP4. Activity is repressed in a MSX1-mediated manner at the bell stage of mesenchymal tooth germ formation which prevents premature differentiation of odontoblasts. This chain is Catenin beta-1, found in Homo sapiens (Human).